Reading from the N-terminus, the 149-residue chain is Ribonuclease P protein component (149 aa).

The disordered stretch occupies residues 123–149; the sequence is GTKVSRRSNGALHDAAPSSQPDPTVSG. Polar residues predominate over residues 139-149; it reads PSSQPDPTVSG.

It belongs to the RnpA family. In terms of assembly, consists of a catalytic RNA component (M1 or rnpB) and a protein subunit.

It catalyses the reaction Endonucleolytic cleavage of RNA, removing 5'-extranucleotides from tRNA precursor.. In terms of biological role, RNaseP catalyzes the removal of the 5'-leader sequence from pre-tRNA to produce the mature 5'-terminus. It can also cleave other RNA substrates such as 4.5S RNA. The protein component plays an auxiliary but essential role in vivo by binding to the 5'-leader sequence and broadening the substrate specificity of the ribozyme. This Caulobacter vibrioides (strain ATCC 19089 / CIP 103742 / CB 15) (Caulobacter crescentus) protein is Ribonuclease P protein component.